The primary structure comprises 932 residues: Protein translocase subunit SecA (932 aa).

ATP is bound by residues Gln86, 104-108 (GEGKT), and Asp494. Residues 857–932 (EDAGAEAHAS…KPAPKRKKRR (76 aa)) are disordered. Polar residues predominate over residues 905 to 915 (TAGSAGDSNLP). Residues 920 to 932 (KTNKPAPKRKKRR) show a composition bias toward basic residues.

Belongs to the SecA family. In terms of assembly, monomer and homodimer. Part of the essential Sec protein translocation apparatus which comprises SecA, SecYEG and auxiliary proteins SecDF. Other proteins may also be involved.

The protein resides in the cell membrane. The protein localises to the cytoplasm. The catalysed reaction is ATP + H2O + cellular proteinSide 1 = ADP + phosphate + cellular proteinSide 2.. Functionally, part of the Sec protein translocase complex. Interacts with the SecYEG preprotein conducting channel. Has a central role in coupling the hydrolysis of ATP to the transfer of proteins into and across the cell membrane, serving as an ATP-driven molecular motor driving the stepwise translocation of polypeptide chains across the membrane. This chain is Protein translocase subunit SecA, found in Renibacterium salmoninarum (strain ATCC 33209 / DSM 20767 / JCM 11484 / NBRC 15589 / NCIMB 2235).